The chain runs to 69 residues: Putative membrane protein insertion efficiency factor (69 aa).

It belongs to the UPF0161 family.

The protein localises to the cell membrane. Functionally, could be involved in insertion of integral membrane proteins into the membrane. The polypeptide is Putative membrane protein insertion efficiency factor (Clostridium botulinum (strain Kyoto / Type A2)).